Reading from the N-terminus, the 217-residue chain is Large ribosomal subunit protein uL1 (217 aa).

Belongs to the universal ribosomal protein uL1 family. Component of the large ribosomal subunit (LSU). Mature ribosomes consist of a small (40S) and a large (60S) subunit. The 40S subunit contains about 32 different proteins and 1 molecule of RNA (18S). The 60S subunit contains 45 different proteins and 3 molecules of RNA (25S, 5.8S and 5S). uL1 forms part of the L1 stalk.

The protein localises to the cytoplasm. Its function is as follows. Component of the ribosome, a large ribonucleoprotein complex responsible for the synthesis of proteins in the cell. The small ribosomal subunit (SSU) binds messenger RNAs (mRNAs) and translates the encoded message by selecting cognate aminoacyl-transfer RNA (tRNA) molecules. The large subunit (LSU) contains the ribosomal catalytic site termed the peptidyl transferase center (PTC), which catalyzes the formation of peptide bonds, thereby polymerizing the amino acids delivered by tRNAs into a polypeptide chain. The nascent polypeptides leave the ribosome through a tunnel in the LSU and interact with protein factors that function in enzymatic processing, targeting, and the membrane insertion of nascent chains at the exit of the ribosomal tunnel. uL1 forms part of the L1 stalk, a mobile element that plays a role in evacuating the exit-site tRNA. In Candida albicans (strain SC5314 / ATCC MYA-2876) (Yeast), this protein is Large ribosomal subunit protein uL1 (RPL10A).